The primary structure comprises 264 residues: COP9 signalosome complex subunit 7b (264 aa).

Alanine 2 carries the N-acetylalanine modification. In terms of domain architecture, PCI spans 2–159 (AGEQKPSSNL…QLLEVDFCIG (158 aa)). Positions 194 to 237 (RANQYKENHSRTQQQVEAEVTNIKKTLKATASSSAQEMEQQLAE) form a coiled coil. The segment covering 223–232 (TASSSAQEME) has biased composition (polar residues). Positions 223–264 (TASSSAQEMEQQLAERECPPHAEQRQPTKKMSKVKGLVSSRH) are disordered. Residues 235–248 (LAERECPPHAEQRQ) are compositionally biased toward basic and acidic residues.

Belongs to the CSN7/EIF3M family. CSN7 subfamily. In terms of assembly, component of the CSN complex, composed of COPS1/GPS1, COPS2, COPS3, COPS4, COPS5, COPS6, COPS7 (COPS7A or COPS7B), COPS8 and COPS9. In the complex, it probably interacts directly with COPS1, COPS2, COPS4, COPS5, COPS6 and COPS8. Interacts with EIF3S6.

It localises to the cytoplasm. The protein resides in the nucleus. Component of the COP9 signalosome complex (CSN), a complex involved in various cellular and developmental processes. The CSN complex is an essential regulator of the ubiquitin (Ubl) conjugation pathway by mediating the deneddylation of the cullin subunits of SCF-type E3 ligase complexes, leading to decrease the Ubl ligase activity of SCF-type complexes such as SCF, CSA or DDB2. The complex is also involved in phosphorylation of p53/TP53, JUN, I-kappa-B-alpha/NFKBIA, ITPK1 and IRF8/ICSBP, possibly via its association with CK2 and PKD kinases. CSN-dependent phosphorylation of TP53 and JUN promotes and protects degradation by the Ubl system, respectively. In Bos taurus (Bovine), this protein is COP9 signalosome complex subunit 7b (COPS7B).